A 1403-amino-acid chain; its full sequence is Centrosomal protein of 162 kDa (1403 aa).

The segment at 18–42 (KELSDDSFENSDKTARQSKKEMKKK) is disordered. Residues serine 157 and serine 160 each carry the phosphoserine modification. The interval 170–231 (QANAELTDDE…EKISVPKQEE (62 aa)) is disordered. Residues 208-231 (TKDEEMPSKENSKSEKISVPKQEE) show a composition bias toward basic and acidic residues. Phosphoserine occurs at positions 474 and 475. The disordered stretch occupies residues 476 to 504 (EEEGAVMGKQVPYKKARSAPPLLKRKPQS). The segment covering 487-502 (PYKKARSAPPLLKRKP) has biased composition (basic residues). Coiled coils occupy residues 617 to 670 (KRVQ…QDNY), 698 to 1121 (VTGE…MLSN), 1171 to 1206 (EVLQ…QFEN), and 1235 to 1386 (CQNA…LHRQ).

This sequence belongs to the CEP162 family. As to quaternary structure, interacts with CEP290. Interacts with CPNE4. Interacts with alpha-tubulin.

The protein resides in the cytoplasm. It is found in the cytoskeleton. The protein localises to the microtubule organizing center. Its subcellular location is the centrosome. It localises to the centriole. The protein resides in the spindle. It is found in the nucleus. Functionally, required to promote assembly of the transition zone in primary cilia. Acts by specifically recognizing and binding the axonemal microtubule. Localizes to the distal ends of centrioles before ciliogenesis and directly binds to axonemal microtubule, thereby promoting and restricting transition zone formation specifically at the cilia base. Required to mediate CEP290 association with microtubules. The protein is Centrosomal protein of 162 kDa (CEP162) of Homo sapiens (Human).